A 602-amino-acid chain; its full sequence is Elongation factor 4 (602 aa).

One can recognise a tr-type G domain in the interval 7-190 (KHIRNFCIVA…AVVQKVPAPS (184 aa)). GTP is bound by residues 19–24 (DHGKST) and 137–140 (NKID).

It belongs to the TRAFAC class translation factor GTPase superfamily. Classic translation factor GTPase family. LepA subfamily.

It is found in the cell membrane. The enzyme catalyses GTP + H2O = GDP + phosphate + H(+). In terms of biological role, required for accurate and efficient protein synthesis under certain stress conditions. May act as a fidelity factor of the translation reaction, by catalyzing a one-codon backward translocation of tRNAs on improperly translocated ribosomes. Back-translocation proceeds from a post-translocation (POST) complex to a pre-translocation (PRE) complex, thus giving elongation factor G a second chance to translocate the tRNAs correctly. Binds to ribosomes in a GTP-dependent manner. The sequence is that of Elongation factor 4 from Clostridium acetobutylicum (strain ATCC 824 / DSM 792 / JCM 1419 / IAM 19013 / LMG 5710 / NBRC 13948 / NRRL B-527 / VKM B-1787 / 2291 / W).